Reading from the N-terminus, the 402-residue chain is MTPVAVTGMGIAAPNGLGRPTTGRPPWAPRAASAASTRFDPSGYPAQLAGEIPGFRAAEHLPGRLVPQTDRVTRLSLAAADWALADAGVEVAAFDPLDMGVVTASHAGGFEFGQDELQKLLGQGQPVLSAYQSFAWFYAVNSGQISIRHGMKGPSGVVVSDQAGGLDALAQARRLVRKGTPLIVCGAVEPRSAPGAGSPSSPAGGMSDSDEPNRAYLPFDRDGRGYVPGGGRGVVPPLERAEAAPARGAEVYGEAGPLARLPAPHSGRGSTRAHAIRTALDDAGTAPGDIRRVFADGGGRYPNDRAEAEAISEVFGPGRVPVTCPRTMTGRLHSGAAPLDVACALLAMRAGVIPPTVHIDPCPEYDLDLVLYQVRPAALRTALGGARGHGGFNSALVVRAGQ.

Disordered regions lie at residues 1 to 30 (MTPVAVTGMGIAAPNGLGRPTTGRPPWAPR) and 188 to 222 (VEPRSAPGAGSPSSPAGGMSDSDEPNRAYLPFDRD). The 400-residue stretch at 1–400 (MTPVAVTGMG…GFNSALVVRA (400 aa)) folds into the Ketosynthase family 3 (KS3) domain. The segment covering 192–205 (SAPGAGSPSSPAGG) has biased composition (low complexity).

This sequence belongs to the thiolase-like superfamily. Beta-ketoacyl-ACP synthases family.

It participates in antifungal biosynthesis; monensin biosynthesis. The sequence is that of Putative polyketide beta-ketoacyl synthase 2 from Streptomyces virginiae (Streptomyces cinnamonensis).